Consider the following 264-residue polypeptide: Energy-coupling factor transporter ATP-binding protein EcfA1 (264 aa).

The ABC transporter domain maps to 2-234 (IQVENLSFSY…DEFNPFLIKI (233 aa)). Residue 34–41 (GKNGSGKS) participates in ATP binding.

It belongs to the ABC transporter superfamily. Energy-coupling factor EcfA family. In terms of assembly, forms a stable energy-coupling factor (ECF) transporter complex composed of 2 membrane-embedded substrate-binding proteins (S component), 2 ATP-binding proteins (A component) and 2 transmembrane proteins (T component).

It is found in the cell inner membrane. ATP-binding (A) component of a common energy-coupling factor (ECF) ABC-transporter complex. Unlike classic ABC transporters this ECF transporter provides the energy necessary to transport a number of different substrates. The protein is Energy-coupling factor transporter ATP-binding protein EcfA1 of Fusobacterium nucleatum subsp. nucleatum (strain ATCC 25586 / DSM 15643 / BCRC 10681 / CIP 101130 / JCM 8532 / KCTC 2640 / LMG 13131 / VPI 4355).